The primary structure comprises 24 residues: Small ribosomal subunit protein uS19c (24 aa).

Belongs to the universal ribosomal protein uS19 family.

The protein resides in the plastid. Its subcellular location is the chloroplast. In terms of biological role, protein S19 forms a complex with S13 that binds strongly to the 16S ribosomal RNA. In Petunia hybrida (Petunia), this protein is Small ribosomal subunit protein uS19c (rps19).